The sequence spans 249 residues: tRNA pseudouridine synthase A (249 aa).

Catalysis depends on Asp-53, which acts as the Nucleophile. Position 111 (Tyr-111) interacts with substrate.

Belongs to the tRNA pseudouridine synthase TruA family. In terms of assembly, homodimer.

The catalysed reaction is uridine(38/39/40) in tRNA = pseudouridine(38/39/40) in tRNA. Functionally, formation of pseudouridine at positions 38, 39 and 40 in the anticodon stem and loop of transfer RNAs. In Streptococcus mutans serotype c (strain ATCC 700610 / UA159), this protein is tRNA pseudouridine synthase A.